Here is a 126-residue protein sequence, read N- to C-terminus: Profilin-1 (126 aa).

The protein belongs to the profilin family. As to quaternary structure, occurs in many kinds of cells as a complex with monomeric actin in a 1:1 ratio.

It localises to the cytoplasm. Its subcellular location is the cytoskeleton. Binds to actin and affects the structure of the cytoskeleton. At high concentrations, profilin prevents the polymerization of actin, whereas it enhances it at low concentrations. By binding to PIP2, it inhibits the formation of IP3 and DG. This is Profilin-1 (proA) from Dictyostelium discoideum (Social amoeba).